The primary structure comprises 513 residues: ATP synthase subunit alpha (513 aa).

169–176 (GDRQTGKT) is an ATP binding site.

Belongs to the ATPase alpha/beta chains family. F-type ATPases have 2 components, CF(1) - the catalytic core - and CF(0) - the membrane proton channel. CF(1) has five subunits: alpha(3), beta(3), gamma(1), delta(1), epsilon(1). CF(0) has three main subunits: a(1), b(2) and c(9-12). The alpha and beta chains form an alternating ring which encloses part of the gamma chain. CF(1) is attached to CF(0) by a central stalk formed by the gamma and epsilon chains, while a peripheral stalk is formed by the delta and b chains.

The protein resides in the cell inner membrane. It carries out the reaction ATP + H2O + 4 H(+)(in) = ADP + phosphate + 5 H(+)(out). Produces ATP from ADP in the presence of a proton gradient across the membrane. The alpha chain is a regulatory subunit. This chain is ATP synthase subunit alpha, found in Haemophilus influenzae (strain 86-028NP).